The primary structure comprises 444 residues: Phosphoglucosamine mutase (444 aa).

Catalysis depends on Ser101, which acts as the Phosphoserine intermediate. Mg(2+) contacts are provided by Ser101, Asp239, Asp241, and Asp243. Ser101 carries the post-translational modification Phosphoserine.

The protein belongs to the phosphohexose mutase family. Mg(2+) is required as a cofactor. In terms of processing, activated by phosphorylation.

It catalyses the reaction alpha-D-glucosamine 1-phosphate = D-glucosamine 6-phosphate. In terms of biological role, catalyzes the conversion of glucosamine-6-phosphate to glucosamine-1-phosphate. This chain is Phosphoglucosamine mutase, found in Alcanivorax borkumensis (strain ATCC 700651 / DSM 11573 / NCIMB 13689 / SK2).